Consider the following 384-residue polypeptide: 2-isopropylmalate synthase 2 (384 aa).

A Pyruvate carboxyltransferase domain is found at 9-260 (VYIVDTTLRD…DLGIDTSRFR (252 aa)). 4 residues coordinate Mn(2+): Asp18, His198, His200, and Asn234.

The protein belongs to the alpha-IPM synthase/homocitrate synthase family. LeuA type 1 subfamily. Homodimer. Mn(2+) is required as a cofactor.

It is found in the cytoplasm. It carries out the reaction 3-methyl-2-oxobutanoate + acetyl-CoA + H2O = (2S)-2-isopropylmalate + CoA + H(+). It participates in amino-acid biosynthesis; L-leucine biosynthesis; L-leucine from 3-methyl-2-oxobutanoate: step 1/4. Functionally, catalyzes the condensation of the acetyl group of acetyl-CoA with 3-methyl-2-oxobutanoate (2-ketoisovalerate) to form 3-carboxy-3-hydroxy-4-methylpentanoate (2-isopropylmalate). This chain is 2-isopropylmalate synthase 2, found in Caldanaerobacter subterraneus subsp. tengcongensis (strain DSM 15242 / JCM 11007 / NBRC 100824 / MB4) (Thermoanaerobacter tengcongensis).